Reading from the N-terminus, the 440-residue chain is Ribosomal protein uS12 methylthiotransferase RimO (440 aa).

The MTTase N-terminal domain occupies 2 to 117; it reads VKVGFVSLGC…LPNVIKKLYE (116 aa). Positions 11, 47, 80, 156, 160, and 163 each coordinate [4Fe-4S] cluster. One can recognise a Radical SAM core domain in the interval 142 to 371; the sequence is ATPKFYAYIK…LNLQRKISLE (230 aa). One can recognise a TRAM domain in the interval 374–440; that stretch reads RKRISKKYEV…FEYDLVGEVI (67 aa).

The protein belongs to the methylthiotransferase family. RimO subfamily. Requires [4Fe-4S] cluster as cofactor.

The protein localises to the cytoplasm. The enzyme catalyses L-aspartate(89)-[ribosomal protein uS12]-hydrogen + (sulfur carrier)-SH + AH2 + 2 S-adenosyl-L-methionine = 3-methylsulfanyl-L-aspartate(89)-[ribosomal protein uS12]-hydrogen + (sulfur carrier)-H + 5'-deoxyadenosine + L-methionine + A + S-adenosyl-L-homocysteine + 2 H(+). Its function is as follows. Catalyzes the methylthiolation of an aspartic acid residue of ribosomal protein uS12. The protein is Ribosomal protein uS12 methylthiotransferase RimO of Caldicellulosiruptor saccharolyticus (strain ATCC 43494 / DSM 8903 / Tp8T 6331).